We begin with the raw amino-acid sequence, 186 residues long: ATP synthase subunit delta (186 aa).

This sequence belongs to the ATPase delta chain family. As to quaternary structure, F-type ATPases have 2 components, F(1) - the catalytic core - and F(0) - the membrane proton channel. F(1) has five subunits: alpha(3), beta(3), gamma(1), delta(1), epsilon(1). F(0) has three main subunits: a(1), b(2) and c(10-14). The alpha and beta chains form an alternating ring which encloses part of the gamma chain. F(1) is attached to F(0) by a central stalk formed by the gamma and epsilon chains, while a peripheral stalk is formed by the delta and b chains.

It is found in the cellular chromatophore membrane. In terms of biological role, f(1)F(0) ATP synthase produces ATP from ADP in the presence of a proton or sodium gradient. F-type ATPases consist of two structural domains, F(1) containing the extramembraneous catalytic core and F(0) containing the membrane proton channel, linked together by a central stalk and a peripheral stalk. During catalysis, ATP synthesis in the catalytic domain of F(1) is coupled via a rotary mechanism of the central stalk subunits to proton translocation. Its function is as follows. This protein is part of the stalk that links CF(0) to CF(1). It either transmits conformational changes from CF(0) to CF(1) or is implicated in proton conduction. This is ATP synthase subunit delta from Rhodobacter capsulatus (Rhodopseudomonas capsulata).